We begin with the raw amino-acid sequence, 466 residues long: Argininosuccinate lyase (466 aa).

Belongs to the lyase 1 family. Argininosuccinate lyase subfamily.

The protein resides in the cytoplasm. The catalysed reaction is 2-(N(omega)-L-arginino)succinate = fumarate + L-arginine. The protein operates within amino-acid biosynthesis; L-arginine biosynthesis; L-arginine from L-ornithine and carbamoyl phosphate: step 3/3. This is Argininosuccinate lyase from Brucella abortus (strain S19).